Reading from the N-terminus, the 307-residue chain is Ras-related protein RabR (307 aa).

A compositionally biased stretch (polar residues) spans 1 to 10 (MTTTTLLSES). Positions 1–45 (MTTTTLLSESTNNSNNTNNNTNNNTNNTMNNNNNNNNNNTIGNNN) are disordered. The span at 11-45 (TNNSNNTNNNTNNNTNNTMNNNNNNNNNNTIGNNN) shows a compositional bias: low complexity. 61-68 (GDEEVGKG) lines the GTP pocket. The short motif at 83–92 (ENLYNIEVDR) is the Effector region element. 122–126 (NFHMH) lines the GTP pocket. Low complexity predominate over residues 175 to 185 (NFNCQSNSRNS). A disordered region spans residues 175-223 (NFNCQSNSRNSTNYNRHSVGNHCPNSPQKGEKENNTHSSTAPPAPPPLP). A compositionally biased stretch (polar residues) spans 186–202 (TNYNRHSVGNHCPNSPQ). GTP is bound at residue 230-233 (NKCD). The residue at position 304 (Cys304) is a Cysteine methyl ester. Cys304 is lipidated: S-geranylgeranyl cysteine. Residues 305–307 (NLM) constitute a propeptide, removed in mature form.

Belongs to the small GTPase superfamily. Rab family.

Its subcellular location is the cell membrane. This chain is Ras-related protein RabR (rabR), found in Dictyostelium discoideum (Social amoeba).